Consider the following 285-residue polypeptide: Putative pyruvate, phosphate dikinase regulatory protein (285 aa).

Residue 165-172 coordinates ADP; it reads GVSRTSKT.

It belongs to the pyruvate, phosphate/water dikinase regulatory protein family. PDRP subfamily.

It carries out the reaction N(tele)-phospho-L-histidyl/L-threonyl-[pyruvate, phosphate dikinase] + ADP = N(tele)-phospho-L-histidyl/O-phospho-L-threonyl-[pyruvate, phosphate dikinase] + AMP + H(+). The catalysed reaction is N(tele)-phospho-L-histidyl/O-phospho-L-threonyl-[pyruvate, phosphate dikinase] + phosphate + H(+) = N(tele)-phospho-L-histidyl/L-threonyl-[pyruvate, phosphate dikinase] + diphosphate. Its function is as follows. Bifunctional serine/threonine kinase and phosphorylase involved in the regulation of the pyruvate, phosphate dikinase (PPDK) by catalyzing its phosphorylation/dephosphorylation. The polypeptide is Putative pyruvate, phosphate dikinase regulatory protein (Lactobacillus delbrueckii subsp. bulgaricus (strain ATCC 11842 / DSM 20081 / BCRC 10696 / JCM 1002 / NBRC 13953 / NCIMB 11778 / NCTC 12712 / WDCM 00102 / Lb 14)).